The chain runs to 52 residues: Ribosome modulation factor (52 aa).

Belongs to the ribosome modulation factor family.

Its subcellular location is the cytoplasm. Its function is as follows. During stationary phase, converts 70S ribosomes to an inactive dimeric form (100S ribosomes). This is Ribosome modulation factor from Xenorhabdus nematophila (strain ATCC 19061 / DSM 3370 / CCUG 14189 / LMG 1036 / NCIMB 9965 / AN6).